We begin with the raw amino-acid sequence, 451 residues long: Phosphoglucosamine mutase (451 aa).

Ser107 serves as the catalytic Phosphoserine intermediate. Mg(2+) is bound by residues Ser107, Asp246, Asp248, and Asp250. Ser107 is subject to Phosphoserine.

This sequence belongs to the phosphohexose mutase family. Mg(2+) serves as cofactor. Activated by phosphorylation.

It catalyses the reaction alpha-D-glucosamine 1-phosphate = D-glucosamine 6-phosphate. Its function is as follows. Catalyzes the conversion of glucosamine-6-phosphate to glucosamine-1-phosphate. This Burkholderia lata (strain ATCC 17760 / DSM 23089 / LMG 22485 / NCIMB 9086 / R18194 / 383) protein is Phosphoglucosamine mutase.